A 966-amino-acid polypeptide reads, in one-letter code: uncharacterized protein (966 aa).

Residues Met1–Ala24 form the signal peptide. The next 6 helical transmembrane spans lie at Ile601 to Ala621, Leu711 to Ile731, Ala743 to Phe763, Val785 to Val805, Phe822 to Phe842, and Gly855 to Val875. Residues Thr918–Lys966 form a disordered region. Positions Ala926–Lys966 are enriched in basic and acidic residues.

Belongs to the TrbL/VirB6 family.

Its subcellular location is the cell membrane. This is an uncharacterized protein from Rickettsia conorii (strain ATCC VR-613 / Malish 7).